We begin with the raw amino-acid sequence, 67 residues long: uncharacterized protein (67 aa).

This is an uncharacterized protein from Escherichia coli (Bacteriophage T4).